The primary structure comprises 338 residues: Ferredoxin--NADP reductase (338 aa).

D35, Q43, Y48, A88, F122, D289, and T330 together coordinate FAD.

Belongs to the ferredoxin--NADP reductase type 2 family. In terms of assembly, homodimer. FAD serves as cofactor.

The enzyme catalyses 2 reduced [2Fe-2S]-[ferredoxin] + NADP(+) + H(+) = 2 oxidized [2Fe-2S]-[ferredoxin] + NADPH. The polypeptide is Ferredoxin--NADP reductase (Ehrlichia canis (strain Jake)).